The chain runs to 1031 residues: Formin-binding protein 4 (1031 aa).

3 disordered regions span residues 1–102 (MMGK…TTRP), 116–143 (AYAD…NQAT), and 166–205 (APVV…QTPG). At Ser19 the chain carries Phosphoserine. Low complexity-rich tracts occupy residues 41–73 (DSTA…APED) and 83–92 (VVEVPNVVQN). 3 positions are modified to phosphoserine: Ser120, Ser125, and Ser128. Polar residues predominate over residues 134 to 143 (SKEANGNQAT). At Thr176 the chain carries Phosphothreonine. Residues 190 to 203 (LSPTASNGSDTAQT) are compositionally biased toward polar residues. In terms of domain architecture, WW 1 spans 218–252 (EIEMGDWQEVWDENTGCYYYWNTQTNEVTWELPQY). An N6-acetyllysine modification is found at Lys294. A Glycyl lysine isopeptide (Lys-Gly) (interchain with G-Cter in SUMO1) cross-link involves residue Lys305. Lys339 is covalently cross-linked (Glycyl lysine isopeptide (Lys-Gly) (interchain with G-Cter in SUMO2)). Lys352 participates in a covalent cross-link: Glycyl lysine isopeptide (Lys-Gly) (interchain with G-Cter in SUMO1); alternate. Lys352 participates in a covalent cross-link: Glycyl lysine isopeptide (Lys-Gly) (interchain with G-Cter in SUMO2); alternate. Residues 355-518 (DPVSETKETS…KETEVEESSE (164 aa)) are disordered. Acidic residues predominate over residues 400–414 (ESEEEEEEEEQDTLE). Residues 418–430 (ALERKKAELRALE) are compositionally biased toward basic and acidic residues. Ser435, Ser440, Ser443, Ser446, and Ser450 each carry phosphoserine. Positions 436–450 (VSGSSPRSDISQPAS) are enriched in polar residues. Residues 457–466 (IMSKRGKWKM) show a composition bias toward basic residues. The segment covering 469–482 (RATSPESTSRSSSK) has biased composition (low complexity). 3 positions are modified to phosphoserine: Ser472, Ser507, and Ser516. Over residues 499–518 (DSEKIDEISDKETEVEESSE) the composition is skewed to basic and acidic residues. Lys527 is covalently cross-linked (Glycyl lysine isopeptide (Lys-Gly) (interchain with G-Cter in SUMO1); alternate). Lys527 participates in a covalent cross-link: Glycyl lysine isopeptide (Lys-Gly) (interchain with G-Cter in SUMO2); alternate. One can recognise a WW 2 domain in the interval 603-637 (NATPKGWSCHWDRDHRRYFYVNEQSGESQWEFPDG). Disordered stretches follow at residues 629 to 681 (ESQW…SLCK), 712 to 813 (PLPL…VQRS), and 900 to 994 (PAQA…RIEE). A compositionally biased stretch (basic and acidic residues) spans 643 to 663 (SQTKEVRDESLPKLTVKDKTC). Positions 664–677 (TDPNSTESSENPTG) are enriched in polar residues. Residues 712 to 741 (PLPLEMPPPPPPPPESPPPPPPPPPPPPPL) show a composition bias toward pro residues. A compositionally biased stretch (acidic residues) spans 742-757 (EDGEIQEVEMEDEGSE). Residues 771 to 794 (KPSTQTTAVTSQSLVDSTASSPPS) show a composition bias toward polar residues. Positions 913-939 (VEPPPPPPPPPTPTPPPPPPAPKVPPP) are enriched in pro residues. Basic residues predominate over residues 943-955 (RKGKKDKAKKSKT). The span at 971–984 (LDEEDNSSSSEEDR) shows a compositional bias: acidic residues. Residues Ser977, Ser978, and Ser979 each carry the phosphoserine modification. Basic and acidic residues predominate over residues 985 to 994 (ESTAQKRIEE).

Binds FMN1. Interacts with the Arg/Gly-rich-flanked Pro-rich regions of KHDRBS1/SAM68. Arginine methylation in these regions has no effect on this binding. In terms of tissue distribution, ubiquitous. Highest levels in spleen and thymus.

This chain is Formin-binding protein 4 (Fnbp4), found in Mus musculus (Mouse).